A 318-amino-acid chain; its full sequence is GTP cyclohydrolase MptA (318 aa).

This sequence belongs to the GTP cyclohydrolase IV family. In terms of assembly, homodimer. Fe(2+) is required as a cofactor.

The enzyme catalyses GTP + H2O = 7,8-dihydroneopterin 2',3'-cyclic phosphate + formate + diphosphate + H(+). Its pathway is cofactor biosynthesis; 5,6,7,8-tetrahydromethanopterin biosynthesis. In terms of biological role, converts GTP to 7,8-dihydro-D-neopterin 2',3'-cyclic phosphate, the first intermediate in the biosynthesis of coenzyme methanopterin. This chain is GTP cyclohydrolase MptA, found in Methanosarcina acetivorans (strain ATCC 35395 / DSM 2834 / JCM 12185 / C2A).